We begin with the raw amino-acid sequence, 678 residues long: Glutamic acid-rich protein (678 aa).

The first 25 residues, 1-25 (MNVLFLSYNICILFFVVCTLNFSTK), serve as a signal peptide directing secretion. A compositionally biased stretch (basic and acidic residues) spans 56 to 79 (EKNKDDNSKSETLLKEEKDEKDDV). Disordered stretches follow at residues 56–194 (EKNK…NLDE), 225–445 (ISSV…VVKN), and 520–678 (VVPR…NAKI). Positions 80-107 (PTTSNDNLKNAHNNNEISSSTDPTNIIN) are enriched in polar residues. Basic and acidic residues predominate over residues 109–120 (NDKDNENSVDKK). 15 tandem repeats follow at residues 120–122 (KKD), 123–125 (KKE), 126–128 (KKH), 129–131 (KKD), 132–134 (KKE), 135–137 (KKE), 138–140 (KKD), 141–143 (KKE), 144–146 (KKD), 147–149 (KKE), 150–152 (KKH), 153–155 (KKE), 156–158 (KKH), 159–161 (KKD), and 162–164 (KKK). The interval 120–164 (KKDKKEKKHKKDKKEKKEKKDKKEKKDKKEKKHKKEKKHKKDKKK) is 15 X 3 AA tandem repeats of K-K-[DEHK]. A compositionally biased stretch (basic residues) spans 121–165 (KDKKEKKHKKDKKEKKEKKDKKEKKDKKEKKHKKEKKHKKDKKKK). Composition is skewed to basic and acidic residues over residues 231–329 (TSND…EEKE) and 371–411 (PEEH…EHKS). 14 tandem repeats follow at residues 372–376 (EEHKE), 377–381 (GEHKE), 382–386 (EEHKE), 387–391 (GEHKE), 392–396 (GEHKE), 397–401 (EEHKE), 402–406 (EEHKK), 407–411 (EEHKS), 412–416 (KEHKS), 417–421 (KGKKD), 422–426 (KGKKD), 427–431 (KGKHK), 432–436 (KAKKE), and 437–441 (KVKKH). The interval 372-416 (EEHKEGEHKEEEHKEGEHKEGEHKEEEHKEEEHKKEEHKSKEHKS) is 9 X 5 AA tandem repeats of [EGK]-E-H-K-[EKS]. Over residues 412 to 443 (KEHKSKGKKDKGKKDKGKHKKAKKEKVKKHVV) the composition is skewed to basic residues. The tract at residues 417–441 (KGKKDKGKKDKGKHKKAKKEKVKKH) is 5 X 5 AA tandem repeats of K-[GAV]-K-[KH]-[DKEH]. Residues 532 to 565 (AKIEEAELQKQKHVDKEEDKKEESKEVQEESKEV) are compositionally biased toward basic and acidic residues. The span at 566-663 (QEDEEEVEED…EEEEEEEEEE (98 aa)) shows a compositional bias: acidic residues. A compositionally biased stretch (basic residues) spans 667 to 678 (KIKRNLRKNAKI).

The sequence is that of Glutamic acid-rich protein (GARP) from Plasmodium falciparum (isolate FC27 / Papua New Guinea).